Consider the following 548-residue polypeptide: Chaperonin GroEL (548 aa).

ATP is bound by residues 30–33 (TLGP), K51, 87–91 (DGTTT), G415, 479–481 (NAA), and D495.

It belongs to the chaperonin (HSP60) family. In terms of assembly, forms a cylinder of 14 subunits composed of two heptameric rings stacked back-to-back. Interacts with the co-chaperonin GroES.

It localises to the cytoplasm. It catalyses the reaction ATP + H2O + a folded polypeptide = ADP + phosphate + an unfolded polypeptide.. Its function is as follows. Together with its co-chaperonin GroES, plays an essential role in assisting protein folding. The GroEL-GroES system forms a nano-cage that allows encapsulation of the non-native substrate proteins and provides a physical environment optimized to promote and accelerate protein folding. The polypeptide is Chaperonin GroEL (Sodalis glossinidius (strain morsitans)).